A 266-amino-acid polypeptide reads, in one-letter code: Hydroxyethylthiazole kinase (266 aa).

Met-43 contributes to the substrate binding site. Positions 119 and 166 each coordinate ATP. Gly-193 serves as a coordination point for substrate.

This sequence belongs to the Thz kinase family. Mg(2+) is required as a cofactor.

It carries out the reaction 5-(2-hydroxyethyl)-4-methylthiazole + ATP = 4-methyl-5-(2-phosphooxyethyl)-thiazole + ADP + H(+). Its pathway is cofactor biosynthesis; thiamine diphosphate biosynthesis; 4-methyl-5-(2-phosphoethyl)-thiazole from 5-(2-hydroxyethyl)-4-methylthiazole: step 1/1. Functionally, catalyzes the phosphorylation of the hydroxyl group of 4-methyl-5-beta-hydroxyethylthiazole (THZ). This is Hydroxyethylthiazole kinase from Methanococcus vannielii (strain ATCC 35089 / DSM 1224 / JCM 13029 / OCM 148 / SB).